Here is a 220-residue protein sequence, read N- to C-terminus: Thiopurine S-methyltransferase (220 aa).

Residues Trp10, Leu45, Glu66, and Arg123 each contribute to the S-adenosyl-L-methionine site.

This sequence belongs to the class I-like SAM-binding methyltransferase superfamily. TPMT family.

The protein resides in the cytoplasm. It carries out the reaction S-adenosyl-L-methionine + a thiopurine = S-adenosyl-L-homocysteine + a thiopurine S-methylether.. This Pseudomonas syringae pv. tomato (strain ATCC BAA-871 / DC3000) protein is Thiopurine S-methyltransferase.